The sequence spans 192 residues: Adenylate kinase (192 aa).

12–17 (GSGKTT) provides a ligand contact to ATP. The tract at residues 34–63 (STGDLLRAEVASGSELGQTIKSYIDNGNLV) is NMP. Residues Thr-35, Arg-40, 61–63 (NLV), 88–91 (GFPR), and Gln-95 contribute to the AMP site. Residues 130 to 136 (GRARGAD) form an LID region. ATP is bound at residue Arg-131. Residues Arg-133 and Arg-145 each contribute to the AMP site. Arg-173 contributes to the ATP binding site.

The protein belongs to the adenylate kinase family. Monomer.

The protein localises to the cytoplasm. It carries out the reaction AMP + ATP = 2 ADP. It participates in purine metabolism; AMP biosynthesis via salvage pathway; AMP from ADP: step 1/1. Functionally, catalyzes the reversible transfer of the terminal phosphate group between ATP and AMP. Plays an important role in cellular energy homeostasis and in adenine nucleotide metabolism. In Nautilia profundicola (strain ATCC BAA-1463 / DSM 18972 / AmH), this protein is Adenylate kinase.